The primary structure comprises 574 residues: Arginine--tRNA ligase (574 aa).

Residues 126–136 (PNIAKRMHVGH) carry the 'HIGH' region motif.

Belongs to the class-I aminoacyl-tRNA synthetase family. As to quaternary structure, monomer.

The protein resides in the cytoplasm. The catalysed reaction is tRNA(Arg) + L-arginine + ATP = L-arginyl-tRNA(Arg) + AMP + diphosphate. The sequence is that of Arginine--tRNA ligase from Chloroflexus aurantiacus (strain ATCC 29366 / DSM 635 / J-10-fl).